The primary structure comprises 444 residues: UDP-N-acetylmuramate--L-alanine ligase (444 aa).

Residue 110 to 116 (GAHGKTS) coordinates ATP.

It belongs to the MurCDEF family.

It localises to the cytoplasm. It carries out the reaction UDP-N-acetyl-alpha-D-muramate + L-alanine + ATP = UDP-N-acetyl-alpha-D-muramoyl-L-alanine + ADP + phosphate + H(+). It functions in the pathway cell wall biogenesis; peptidoglycan biosynthesis. Cell wall formation. The chain is UDP-N-acetylmuramate--L-alanine ligase from Streptococcus pneumoniae (strain JJA).